The primary structure comprises 165 residues: 3-isopropylmalate dehydratase small subunit (165 aa).

This sequence belongs to the LeuD family. LeuD type 2 subfamily. As to quaternary structure, heterodimer of LeuC and LeuD.

The catalysed reaction is (2R,3S)-3-isopropylmalate = (2S)-2-isopropylmalate. It participates in amino-acid biosynthesis; L-leucine biosynthesis; L-leucine from 3-methyl-2-oxobutanoate: step 2/4. Catalyzes the isomerization between 2-isopropylmalate and 3-isopropylmalate, via the formation of 2-isopropylmaleate. In Hydrogenobaculum sp. (strain Y04AAS1), this protein is 3-isopropylmalate dehydratase small subunit.